Reading from the N-terminus, the 495-residue chain is Formin-like protein 17 (495 aa).

The tract at residues 1–92 is disordered; sequence MDIRELIDIT…HNLKGQGQTR (92 aa). A compositionally biased stretch (pro residues) spans 19 to 29; it reads GPPPPPPPPLL. Low complexity predominate over residues 30–39; it reads QPHHSALSSS. The FH2 domain occupies 86–486; sequence KGQGQTRKAN…RAQKEAENEK (401 aa).

This sequence belongs to the formin-like family. Class-II subfamily.

This is Formin-like protein 17 (FH17) from Arabidopsis thaliana (Mouse-ear cress).